A 67-amino-acid chain; its full sequence is Large ribosomal subunit protein bL31 (67 aa).

Belongs to the bacterial ribosomal protein bL31 family. Type A subfamily. In terms of assembly, part of the 50S ribosomal subunit.

In terms of biological role, binds the 23S rRNA. The chain is Large ribosomal subunit protein bL31 from Wolinella succinogenes (strain ATCC 29543 / DSM 1740 / CCUG 13145 / JCM 31913 / LMG 7466 / NCTC 11488 / FDC 602W) (Vibrio succinogenes).